The chain runs to 158 residues: Small ribosomal subunit protein uS7 (158 aa).

It belongs to the universal ribosomal protein uS7 family. In terms of assembly, part of the 30S ribosomal subunit. Contacts proteins S9 and S11.

In terms of biological role, one of the primary rRNA binding proteins, it binds directly to 16S rRNA where it nucleates assembly of the head domain of the 30S subunit. Is located at the subunit interface close to the decoding center, probably blocks exit of the E-site tRNA. In Parabacteroides distasonis (strain ATCC 8503 / DSM 20701 / CIP 104284 / JCM 5825 / NCTC 11152), this protein is Small ribosomal subunit protein uS7.